Consider the following 275-residue polypeptide: Chemotaxis protein methyltransferase 1 (275 aa).

The region spanning 1 to 275 (MTAITISDQE…CNPGIIYKLK (275 aa)) is the CheR-type methyltransferase domain. S-adenosyl-L-methionine is bound by residues asparagine 76, threonine 78, arginine 82, glutamate 117, aspartate 145, 201-202 (NL), and 218-219 (RN).

It carries out the reaction L-glutamyl-[protein] + S-adenosyl-L-methionine = [protein]-L-glutamate 5-O-methyl ester + S-adenosyl-L-homocysteine. Functionally, methylation of the membrane-bound methyl-accepting chemotaxis proteins (MCP) to form gamma-glutamyl methyl ester residues in MCP. This is Chemotaxis protein methyltransferase 1 (cheR1) from Vibrio cholerae serotype O1 (strain ATCC 39315 / El Tor Inaba N16961).